The following is a 465-amino-acid chain: UDP-N-acetylmuramoylalanine--D-glutamate ligase (465 aa).

Position 127–133 (127–133) interacts with ATP; it reads GSNGKST.

Belongs to the MurCDEF family.

The protein resides in the cytoplasm. The enzyme catalyses UDP-N-acetyl-alpha-D-muramoyl-L-alanine + D-glutamate + ATP = UDP-N-acetyl-alpha-D-muramoyl-L-alanyl-D-glutamate + ADP + phosphate + H(+). It functions in the pathway cell wall biogenesis; peptidoglycan biosynthesis. Functionally, cell wall formation. Catalyzes the addition of glutamate to the nucleotide precursor UDP-N-acetylmuramoyl-L-alanine (UMA). The polypeptide is UDP-N-acetylmuramoylalanine--D-glutamate ligase (Cereibacter sphaeroides (strain KD131 / KCTC 12085) (Rhodobacter sphaeroides)).